The primary structure comprises 64 residues: Conotoxin Leo-T1 (64 aa).

The signal sequence occupies residues 1–22 (MRCLPVFIILLLLIPSAPSVDA). A propeptide spanning residues 23–48 (QPKTEDDVPLASLHDNAKLTLQGLWD) is cleaved from the precursor.

This sequence belongs to the conotoxin T superfamily. Contains 2 disulfide bonds that can be either 'C1-C3, C2-C4' or 'C1-C4, C2-C3', since these disulfide connectivities have been observed for conotoxins with cysteine framework V (for examples, see AC P0DQQ7 and AC P81755). As to expression, expressed by the venom duct.

Its subcellular location is the secreted. In Conus leopardus (Leopard cone), this protein is Conotoxin Leo-T1.